Consider the following 633-residue polypeptide: Threonine--tRNA ligase (633 aa).

A TGS domain is found at 1-61 (MINIHFSNNL…IENCTFEVIT (61 aa)). A catalytic region spans residues 242 to 533 (DHRKIGRELE…LIEHHSGKFP (292 aa)). Residues cysteine 333, histidine 384, and histidine 510 each coordinate Zn(2+).

The protein belongs to the class-II aminoacyl-tRNA synthetase family. In terms of assembly, homodimer. Zn(2+) is required as a cofactor.

The protein resides in the cytoplasm. The enzyme catalyses tRNA(Thr) + L-threonine + ATP = L-threonyl-tRNA(Thr) + AMP + diphosphate + H(+). Catalyzes the attachment of threonine to tRNA(Thr) in a two-step reaction: L-threonine is first activated by ATP to form Thr-AMP and then transferred to the acceptor end of tRNA(Thr). Also edits incorrectly charged L-seryl-tRNA(Thr). This is Threonine--tRNA ligase from Ehrlichia chaffeensis (strain ATCC CRL-10679 / Arkansas).